Here is a 1122-residue protein sequence, read N- to C-terminus: AP-4 complex subunit epsilon-1 (1122 aa).

At serine 699 the chain carries Phosphoserine. Composition is skewed to basic and acidic residues over residues tyrosine 714 to alanine 728 and threonine 745 to glutamate 760. 2 disordered regions span residues tyrosine 714–glutamate 760 and serine 797–leucine 861. The interaction with TEPSIN stretch occupies residues proline 726 to serine 1122. Over residues glutamate 841–serine 853 the composition is skewed to low complexity. Serine 851 is subject to Phosphoserine.

This sequence belongs to the adaptor complexes large subunit family. In terms of assembly, adaptor protein complex 4 (AP-4) is a heterotetramer composed of two large adaptins (epsilon-type subunit AP4E1 and beta-type subunit AP4B1), a medium adaptin (mu-type subunit AP4M1) and a small adaptin (sigma-type AP4S1). Interacts with TEPSIN. Interacts with GRIA2; probably indirect it mediates the somatodendritic localization of GRIA2 in neurons.

The protein resides in the golgi apparatus. The protein localises to the trans-Golgi network membrane. Functionally, component of the adaptor protein complex 4 (AP-4). Adaptor protein complexes are vesicle coat components involved both in vesicle formation and cargo selection. They control the vesicular transport of proteins in different trafficking pathways. AP-4 forms a non clathrin-associated coat on vesicles departing the trans-Golgi network (TGN) and may be involved in the targeting of proteins from the trans-Golgi network (TGN) to the endosomal-lysosomal system. It is also involved in protein sorting to the basolateral membrane in epithelial cells and the proper asymmetric localization of somatodendritic proteins in neurons. AP-4 is involved in the recognition and binding of tyrosine-based sorting signals found in the cytoplasmic part of cargos, but may also recognize other types of sorting signal. In Mus musculus (Mouse), this protein is AP-4 complex subunit epsilon-1.